Reading from the N-terminus, the 94-residue chain is Phosphoribosyl-ATP pyrophosphatase (94 aa).

Belongs to the PRA-PH family.

Its subcellular location is the cytoplasm. It carries out the reaction 1-(5-phospho-beta-D-ribosyl)-ATP + H2O = 1-(5-phospho-beta-D-ribosyl)-5'-AMP + diphosphate + H(+). Its pathway is amino-acid biosynthesis; L-histidine biosynthesis; L-histidine from 5-phospho-alpha-D-ribose 1-diphosphate: step 2/9. This is Phosphoribosyl-ATP pyrophosphatase from Saccharolobus islandicus (strain M.16.27) (Sulfolobus islandicus).